Here is a 273-residue protein sequence, read N- to C-terminus: 4-hydroxy-tetrahydrodipicolinate reductase (273 aa).

NAD(+)-binding positions include G12–M17 and E38. R39 is a binding site for NADP(+). NAD(+) contacts are provided by residues G102 to T104 and A126 to F129. The active-site Proton donor/acceptor is the H159. (S)-2,3,4,5-tetrahydrodipicolinate is bound at residue H160. K163 serves as the catalytic Proton donor. G169 to T170 contacts (S)-2,3,4,5-tetrahydrodipicolinate.

Belongs to the DapB family. In terms of assembly, homotetramer.

Its subcellular location is the cytoplasm. It carries out the reaction (S)-2,3,4,5-tetrahydrodipicolinate + NAD(+) + H2O = (2S,4S)-4-hydroxy-2,3,4,5-tetrahydrodipicolinate + NADH + H(+). The catalysed reaction is (S)-2,3,4,5-tetrahydrodipicolinate + NADP(+) + H2O = (2S,4S)-4-hydroxy-2,3,4,5-tetrahydrodipicolinate + NADPH + H(+). The protein operates within amino-acid biosynthesis; L-lysine biosynthesis via DAP pathway; (S)-tetrahydrodipicolinate from L-aspartate: step 4/4. Functionally, catalyzes the conversion of 4-hydroxy-tetrahydrodipicolinate (HTPA) to tetrahydrodipicolinate. The protein is 4-hydroxy-tetrahydrodipicolinate reductase of Salmonella gallinarum (strain 287/91 / NCTC 13346).